A 367-amino-acid chain; its full sequence is NADH-quinone oxidoreductase subunit D (367 aa).

The protein belongs to the complex I 49 kDa subunit family. As to quaternary structure, NDH-1 is composed of 14 different subunits. Subunits NuoB, C, D, E, F, and G constitute the peripheral sector of the complex.

The protein resides in the cell membrane. It carries out the reaction a quinone + NADH + 5 H(+)(in) = a quinol + NAD(+) + 4 H(+)(out). In terms of biological role, NDH-1 shuttles electrons from NADH, via FMN and iron-sulfur (Fe-S) centers, to quinones in the respiratory chain. The immediate electron acceptor for the enzyme in this species is believed to be ubiquinone. Couples the redox reaction to proton translocation (for every two electrons transferred, four hydrogen ions are translocated across the cytoplasmic membrane), and thus conserves the redox energy in a proton gradient. The sequence is that of NADH-quinone oxidoreductase subunit D from Dehalococcoides mccartyi (strain CBDB1).